A 434-amino-acid polypeptide reads, in one-letter code: UPF0597 protein CLI_2075 (434 aa).

It belongs to the UPF0597 family.

The polypeptide is UPF0597 protein CLI_2075 (Clostridium botulinum (strain Langeland / NCTC 10281 / Type F)).